The primary structure comprises 429 residues: DNA primase DnaG (429 aa).

Residues 172–246 form the Toprim domain; it reads DSIIVVEGRN…DVDFIARAPP (75 aa). Mg(2+)-binding residues include Glu178, Asp220, and Asp222. Residues 287–322 are disordered; it reads RNTKELEERQGNELKNERPEKINENEESEKNVELKE.

The protein belongs to the archaeal DnaG primase family. As to quaternary structure, forms a ternary complex with MCM helicase and DNA. Component of the archaeal exosome complex. Mg(2+) is required as a cofactor.

It catalyses the reaction ssDNA + n NTP = ssDNA/pppN(pN)n-1 hybrid + (n-1) diphosphate.. Its function is as follows. RNA polymerase that catalyzes the synthesis of short RNA molecules used as primers for DNA polymerase during DNA replication. Also part of the exosome, which is a complex involved in RNA degradation. Acts as a poly(A)-binding protein that enhances the interaction between heteromeric, adenine-rich transcripts and the exosome. The protein is DNA primase DnaG of Picrophilus torridus (strain ATCC 700027 / DSM 9790 / JCM 10055 / NBRC 100828 / KAW 2/3).